We begin with the raw amino-acid sequence, 610 residues long: Zinc metalloproteinase-disintegrin-like BITM06A (610 aa).

Positions 1 to 20 (MIQVLLVTICLAAFPYQGSS) are cleaved as a signal peptide. A propeptide spanning residues 21–189 (IILESGNVND…KKASQLVVTA (169 aa)) is cleaved from the precursor. Residues 198 to 394 (RYVELFIVVD…ENPQCILNEP (197 aa)) enclose the Peptidase M12B domain. Ca(2+) is bound by residues glutamate 201 and aspartate 285. Cystine bridges form between cysteine 309–cysteine 389, cysteine 349–cysteine 373, and cysteine 351–cysteine 356. Position 334 (histidine 334) interacts with Zn(2+). Residue glutamate 335 is part of the active site. Residues histidine 338 and histidine 344 each contribute to the Zn(2+) site. Asparagine 372 carries an N-linked (GlcNAc...) asparagine glycan. 8 residues coordinate Ca(2+): cysteine 389, asparagine 392, valine 404, asparagine 407, leucine 409, glutamate 411, glutamate 414, and aspartate 417. Residues 402-488 (PPVCGNELLE…ECPADVFHKN (87 aa)) form the Disintegrin domain. Cystine bridges form between cysteine 405/cysteine 434, cysteine 416/cysteine 429, cysteine 418/cysteine 424, cysteine 428/cysteine 451, cysteine 442/cysteine 448, cysteine 447/cysteine 473, cysteine 460/cysteine 480, cysteine 467/cysteine 499, cysteine 492/cysteine 504, cysteine 511/cysteine 561, cysteine 526/cysteine 572, cysteine 539/cysteine 549, cysteine 556/cysteine 598, and cysteine 592/cysteine 603. Positions 466 to 468 (ECD) match the D/ECD-tripeptide motif. The Ca(2+) site is built by aspartate 468, proline 469, glutamate 471, aspartate 483, and valine 484.

It belongs to the venom metalloproteinase (M12B) family. P-III subfamily. P-IIIa sub-subfamily. In terms of assembly, monomer. It depends on Zn(2+) as a cofactor. Expressed by the venom gland.

Its subcellular location is the secreted. In terms of biological role, snake venom metalloproteinase that impairs hemostasis in the envenomed animal. The polypeptide is Zinc metalloproteinase-disintegrin-like BITM06A (Bothrops insularis (Golden lancehead)).